A 423-amino-acid polypeptide reads, in one-letter code: Imidazolonepropionase (423 aa).

The Fe(3+) site is built by His-78 and His-80. Zn(2+) is bound by residues His-78 and His-80. Positions 87, 150, and 183 each coordinate 4-imidazolone-5-propanoate. Tyr-150 contacts N-formimidoyl-L-glutamate. Fe(3+) is bound at residue His-247. His-247 is a Zn(2+) binding site. Glu-250 contacts 4-imidazolone-5-propanoate. Residue Asp-322 coordinates Fe(3+). Asp-322 contributes to the Zn(2+) binding site. The N-formimidoyl-L-glutamate site is built by Asn-324 and Gly-326. Residue Ser-327 participates in 4-imidazolone-5-propanoate binding.

Belongs to the metallo-dependent hydrolases superfamily. HutI family. Zn(2+) is required as a cofactor. Requires Fe(3+) as cofactor.

It is found in the cytoplasm. It carries out the reaction 4-imidazolone-5-propanoate + H2O = N-formimidoyl-L-glutamate. Its pathway is amino-acid degradation; L-histidine degradation into L-glutamate; N-formimidoyl-L-glutamate from L-histidine: step 3/3. Functionally, catalyzes the hydrolytic cleavage of the carbon-nitrogen bond in imidazolone-5-propanoate to yield N-formimidoyl-L-glutamate. It is the third step in the universal histidine degradation pathway. The chain is Imidazolonepropionase from Bacillus thuringiensis (strain Al Hakam).